We begin with the raw amino-acid sequence, 473 residues long: Cysteine--tRNA ligase (473 aa).

Cys-30 is a Zn(2+) binding site. Residues 32 to 42 carry the 'HIGH' region motif; the sequence is MTVYDYCHIGH. Zn(2+) is bound by residues Cys-213, His-238, and Glu-242. The 'KMSKS' region signature appears at 270-274; the sequence is KMSKS. Residue Lys-273 coordinates ATP.

This sequence belongs to the class-I aminoacyl-tRNA synthetase family. In terms of assembly, monomer. Zn(2+) serves as cofactor.

It localises to the cytoplasm. The catalysed reaction is tRNA(Cys) + L-cysteine + ATP = L-cysteinyl-tRNA(Cys) + AMP + diphosphate. The chain is Cysteine--tRNA ligase from Acinetobacter baumannii (strain AB307-0294).